A 1228-amino-acid polypeptide reads, in one-letter code: S-layer protein (1228 aa).

A signal peptide spans 1–30; it reads MDRKKAVKLATASAIAASAFVAANPNASEA.

The protein resides in the secreted. It is found in the cell wall. The protein localises to the S-layer. Functionally, the S-layer is a paracrystalline mono-layered assembly of proteins which coat the surface of bacteria. This is S-layer protein (sbsA) from Geobacillus stearothermophilus (Bacillus stearothermophilus).